The chain runs to 40 residues: Photosystem II reaction center protein J (40 aa).

The helical transmembrane segment at 8-28 (IPLWIIGTVAGILVIGLIGIF) threads the bilayer.

The protein belongs to the PsbJ family. PSII is composed of 1 copy each of membrane proteins PsbA, PsbB, PsbC, PsbD, PsbE, PsbF, PsbH, PsbI, PsbJ, PsbK, PsbL, PsbM, PsbT, PsbX, PsbY, PsbZ, Psb30/Ycf12, at least 3 peripheral proteins of the oxygen-evolving complex and a large number of cofactors. It forms dimeric complexes.

It localises to the plastid. The protein resides in the chloroplast thylakoid membrane. Its function is as follows. One of the components of the core complex of photosystem II (PSII). PSII is a light-driven water:plastoquinone oxidoreductase that uses light energy to abstract electrons from H(2)O, generating O(2) and a proton gradient subsequently used for ATP formation. It consists of a core antenna complex that captures photons, and an electron transfer chain that converts photonic excitation into a charge separation. This is Photosystem II reaction center protein J from Nicotiana sylvestris (Wood tobacco).